A 156-amino-acid polypeptide reads, in one-letter code: Dihydrofolate reductase (156 aa).

Residues 1–156 (MLKLIWCQTL…VNYYSNKKEK (156 aa)) form the DHFR domain.

Belongs to the dihydrofolate reductase family.

It carries out the reaction (6S)-5,6,7,8-tetrahydrofolate + NADP(+) = 7,8-dihydrofolate + NADPH + H(+). It participates in cofactor biosynthesis; tetrahydrofolate biosynthesis; 5,6,7,8-tetrahydrofolate from 7,8-dihydrofolate: step 1/1. Its function is as follows. Key enzyme in folate metabolism. Catalyzes an essential reaction for de novo glycine and purine synthesis, and for DNA precursor synthesis. In Ureaplasma parvum serovar 3 (strain ATCC 700970), this protein is Dihydrofolate reductase (folA).